A 488-amino-acid polypeptide reads, in one-letter code: Zinc metalloproteinase-disintegrin agkistin (488 aa).

Positions 1 to 20 are cleaved as a signal peptide; that stretch reads MIQVLLVTICLAVFPYQGSS. Residues 21 to 195 constitute a propeptide that is removed on maturation; sequence IILESGNVND…NFPPDGRIEF (175 aa). Residues 198-394 enclose the Peptidase M12B domain; that stretch reads RYIELVIVAD…NPLASYCLYN (197 aa). E201 serves as a coordination point for Ca(2+). Residue N258 is glycosylated (N-linked (GlcNAc...) asparagine). D285 lines the Ca(2+) pocket. Intrachain disulfides connect C309-C391, C349-C373, and C351-C356. H334 contributes to the Zn(2+) binding site. E335 is a catalytic residue. Residues H338 and H344 each coordinate Zn(2+). Ca(2+) is bound by residues C391, N394, V406, N409, E413, E416, and D419. The region spanning 404-488 is the Disintegrin domain; that stretch reads PPVCGNYYLE…AGCPRNPSHA (85 aa). 7 disulfides stabilise this stretch: C407/C426, C418/C436, C420/C431, C430/C453, C444/C450, C449/C474, and C462/C481. The Cell attachment site motif lies at 466-468; that stretch reads RGD.

The protein belongs to the venom metalloproteinase (M12B) family. P-II subfamily. P-IIb sub-subfamily. As to quaternary structure, monomer. The cofactor is Zn(2+). Expressed by the venom gland.

The protein localises to the secreted. Functionally, inhibits ADP-induced human platelet aggregation, inhibits bovine aortic endothelial cells (BAEC) migration, has anti-angiogenic activity and induces BAEC and human micro-vascular endothelial cell (HMEC) apoptosis. The metalloproteinase domain may act in hemorrhage. This Gloydius halys (Chinese water mocassin) protein is Zinc metalloproteinase-disintegrin agkistin.